The chain runs to 185 residues: Large ribosomal subunit protein bL25 (185 aa).

This sequence belongs to the bacterial ribosomal protein bL25 family. CTC subfamily. In terms of assembly, part of the 50S ribosomal subunit; part of the 5S rRNA/L5/L18/L25 subcomplex. Contacts the 5S rRNA. Binds to the 5S rRNA independently of L5 and L18.

Its function is as follows. This is one of the proteins that binds to the 5S RNA in the ribosome where it forms part of the central protuberance. The protein is Large ribosomal subunit protein bL25 of Chlamydia caviae (strain ATCC VR-813 / DSM 19441 / 03DC25 / GPIC) (Chlamydophila caviae).